Consider the following 508-residue polypeptide: Maturase K (508 aa).

It belongs to the intron maturase 2 family. MatK subfamily.

Its subcellular location is the plastid. It localises to the chloroplast. Functionally, usually encoded in the trnK tRNA gene intron. Probably assists in splicing its own and other chloroplast group II introns. In Collinsia heterophylla (Purple Chinese houses), this protein is Maturase K.